We begin with the raw amino-acid sequence, 568 residues long: Sphingosine-1-phosphate lyase 1 (568 aa).

At 1–41 (MPSTDLLKLKDFEPYLEILEAYSTKAKNYVNGYCTKYEPWQ) the chain is on the lumenal side. The chain crosses the membrane as a helical; Signal-anchor for type III membrane protein span at residues 42-62 (LIAGSVLCTLLVVWVYELIFQ). Residues 63–568 (PESLWSRFKN…NQMNGSPKPR (506 aa)) lie on the Cytoplasmic side of the membrane. At Lys353 the chain carries N6-(pyridoxal phosphate)lysine; alternate. Position 353 is an N6-acetyllysine; alternate (Lys353). Tyr356 and Tyr366 each carry 3'-nitrotyrosine. Residue Ser564 is modified to Phosphoserine.

It belongs to the group II decarboxylase family. Sphingosine-1-phosphate lyase subfamily. In terms of assembly, homodimer. It depends on pyridoxal 5'-phosphate as a cofactor.

The protein resides in the endoplasmic reticulum membrane. The enzyme catalyses sphinganine 1-phosphate = hexadecanal + phosphoethanolamine. It carries out the reaction sphing-4-enine 1-phosphate = (2E)-hexadecenal + phosphoethanolamine. It functions in the pathway lipid metabolism; sphingolipid metabolism. Its function is as follows. Cleaves phosphorylated sphingoid bases (PSBs), such as sphingosine-1-phosphate, into fatty aldehydes and phosphoethanolamine. Elevates stress-induced ceramide production and apoptosis. Required for global lipid homeostasis in liver and cholesterol homeostasis in fibroblasts. Involved in the regulation of pro-inflammatory response and neutrophil trafficking. Modulates neuronal autophagy via phosphoethanolamine production which regulates accumulation of aggregate-prone proteins such as APP. Seems to play a role in establishing neuronal contact sites and axonal maintenance. The chain is Sphingosine-1-phosphate lyase 1 from Rattus norvegicus (Rat).